Consider the following 480-residue polypeptide: Na(+)/H(+) antiporter NhaA (480 aa).

Helical transmembrane passes span 34–54 (VGGV…NIPA), 76–96 (LSVA…VAGI), 113–133 (AVLP…VYTL), 144–164 (GWAV…AVIG), 174–194 (FLLT…AIFF), 197–217 (RINF…WLLL), 223–243 (GWYV…NSGV), 282–302 (GLAV…GGAL), 312–332 (LGVV…STWL), 350–370 (IFAV…IGEL), and 381–401 (EVKA…TVLL). A disordered region spans residues 454 to 480 (AAEKAAAARHGGAEVPGGAGEEDGRPA).

Belongs to the NhaA Na(+)/H(+) (TC 2.A.33) antiporter family.

Its subcellular location is the cell membrane. It catalyses the reaction Na(+)(in) + 2 H(+)(out) = Na(+)(out) + 2 H(+)(in). Its function is as follows. Na(+)/H(+) antiporter that extrudes sodium in exchange for external protons. The polypeptide is Na(+)/H(+) antiporter NhaA (Streptomyces antibioticus).